The following is a 78-amino-acid chain: Large ribosomal subunit protein bL28 (78 aa).

A disordered region spans residues 1 to 25; that stretch reads MSRVCQVTGKRPTVGNNRSHARNAT.

The protein belongs to the bacterial ribosomal protein bL28 family.

This Alteromonas mediterranea (strain DSM 17117 / CIP 110805 / LMG 28347 / Deep ecotype) protein is Large ribosomal subunit protein bL28.